A 763-amino-acid chain; its full sequence is Protein translocase subunit SecA 2 (763 aa).

Residues Gln-83, 101–105, and Asp-490 each bind ATP; that span reads GEGKT.

Belongs to the SecA family. In terms of assembly, monomer and homodimer. Part of the essential Sec protein translocation apparatus which comprises SecA, SecYEG and auxiliary proteins SecDF. Other proteins may also be involved.

It localises to the cell membrane. The protein localises to the cytoplasm. It carries out the reaction ATP + H2O + cellular proteinSide 1 = ADP + phosphate + cellular proteinSide 2.. In terms of biological role, part of the Sec protein translocase complex. Interacts with the SecYEG preprotein conducting channel. Has a central role in coupling the hydrolysis of ATP to the transfer of proteins into and across the cell membrane, serving as an ATP-driven molecular motor driving the stepwise translocation of polypeptide chains across the membrane. The sequence is that of Protein translocase subunit SecA 2 from Corynebacterium efficiens (strain DSM 44549 / YS-314 / AJ 12310 / JCM 11189 / NBRC 100395).